Reading from the N-terminus, the 164-residue chain is Transcription elongation factor GreA (164 aa).

The stretch at 50-76 forms a coiled coil; the sequence is YHAAREEQGQQEARIRQLQDLLSNAKV.

The protein belongs to the GreA/GreB family.

Necessary for efficient RNA polymerase transcription elongation past template-encoded arresting sites. The arresting sites in DNA have the property of trapping a certain fraction of elongating RNA polymerases that pass through, resulting in locked ternary complexes. Cleavage of the nascent transcript by cleavage factors such as GreA or GreB allows the resumption of elongation from the new 3'terminus. GreA releases sequences of 2 to 3 nucleotides. In Mycobacterium bovis (strain ATCC BAA-935 / AF2122/97), this protein is Transcription elongation factor GreA.